The following is a 221-amino-acid chain: Probable septum site-determining protein MinC (221 aa).

The protein belongs to the MinC family. As to quaternary structure, interacts with MinD and FtsZ.

Its function is as follows. Cell division inhibitor that blocks the formation of polar Z ring septums. Rapidly oscillates between the poles of the cell to destabilize FtsZ filaments that have formed before they mature into polar Z rings. Prevents FtsZ polymerization. This Shewanella loihica (strain ATCC BAA-1088 / PV-4) protein is Probable septum site-determining protein MinC.